We begin with the raw amino-acid sequence, 210 residues long: Ribosomal RNA small subunit methyltransferase G (210 aa).

Residues Gly-77, Phe-82, 100 to 102, 128 to 129, and Arg-141 contribute to the S-adenosyl-L-methionine site; these read ERS and VE.

Belongs to the methyltransferase superfamily. RNA methyltransferase RsmG family.

It localises to the cytoplasm. Its function is as follows. Specifically methylates the N7 position of a guanine in 16S rRNA. This Borrelia recurrentis (strain A1) protein is Ribosomal RNA small subunit methyltransferase G.